We begin with the raw amino-acid sequence, 298 residues long: MATTSNQNVEFVRTGYGKNMVKVLHIRREGNHHHIIELIANVQLTLKTRKDYLTGDNSDIIPTDTVKNTVHALAKLKGIKSIESFALDICEHFLTAFNHVTRVKVNIDEVPWKRLEKNGVEHNHAFIHCPEALRFCEAEQYLSKTPVVHSGLKDMKVLKTTQTGFEGFLRDRFTTLTDAKDRFFCTSVYARWRYNTINVAFDAAWKAVKDTVIQKFAGPYDRGEYSPSVQKTLYDTQLLVLDRIPEVEEIEIIMPNQHYFVIDMTKIGLSNKDEVYLPLDNPSGNITGTVCRKPRARM.

Residues lysine 18 and threonine 63 each act as charge relay system in the active site. Positions 63, 64, 165, 182, 229, 230, and 256 each coordinate urate. The active-site Charge relay system is histidine 258. Positions alanine 296–methionine 298 match the Microbody targeting signal motif.

This sequence belongs to the uricase family. In terms of assembly, homotetramer; dimer of dimers.

The protein resides in the peroxisome. It catalyses the reaction urate + O2 + H2O = 5-hydroxyisourate + H2O2. It participates in purine metabolism; urate degradation; (S)-allantoin from urate: step 1/3. With respect to regulation, competitively inhibited by xanthine. In terms of biological role, catalyzes the oxidation of uric acid to 5-hydroxyisourate, which is further processed to form (S)-allantoin. This is Uricase from Danio rerio (Zebrafish).